The chain runs to 157 residues: Protein-export protein SecB (157 aa).

The protein belongs to the SecB family. As to quaternary structure, homotetramer, a dimer of dimers. One homotetramer interacts with 1 SecA dimer.

The protein localises to the cytoplasm. Its function is as follows. One of the proteins required for the normal export of preproteins out of the cell cytoplasm. It is a molecular chaperone that binds to a subset of precursor proteins, maintaining them in a translocation-competent state. It also specifically binds to its receptor SecA. The chain is Protein-export protein SecB from Methylobacillus flagellatus (strain ATCC 51484 / DSM 6875 / VKM B-1610 / KT).